The following is a 740-amino-acid chain: Vacuolar protein sorting-associated protein 51 homolog (740 aa).

Coiled coils occupy residues 65-87 and 322-344; these read SATDTIRRMKDDFKQMETDVNLL and RALDRLHRRLQAMRNICRGLEVQ.

It belongs to the VPS51 family. As to quaternary structure, component of the Golgi-associated retrograde protein (GARP) complex.

May act as a component of the GARP complex that is involved in retrograde transport from early and late endosomes to the trans-Golgi network (TGN). The chain is Vacuolar protein sorting-associated protein 51 homolog from Drosophila melanogaster (Fruit fly).